The primary structure comprises 1009 residues: METDQDMHDQAMAGEETDLDEKYPNRPQNKAPTLPFHDLYETLFRPLREIKKKPVGPAGNRRKAGPHGLSAANLNPIERRRDIIERFISRWRKEVGDDIYPAFRLILPDKDRDRAMYGMKEKIIGKMLVNIMKIDKNSEDGFNLLNWKLPGQSATSSMAGDFAGRCYDVVSKRPMRTEFGNMLIEEVNEKLDQLSSASKEEEQLPILAEFYRRMNPEELAWLIRIILRQMKLGATERTFFDVWHPDAENLYSISSSLRRVCWELHDPNIRLDAEDRGVSLMQCFQPQLAQFQMQSLDRMIARMRPTEDDPVFWIEEKLDGERMQLHMVSDASAPGGRRFRFWSRKAKDYTYLYGNGIYDEAGSLTRHLKDAFADGVDNLILDGEMITWNTEQDAPEPFGTLKTAALSEQRNPFRQGIHPLFRVFDILYLNGRDLTRYTLRDRRNALQKVIKPVHRRFEVHSYEEATTKAEVEASLRKAVAEASEGLVLKNPRSPYRLNERHDDWMKVKPEYMTEFGESLDLVVIGGYYGSGHRGGKLSSFLCGLRVDEGQSSQGSNPTKCYSFCKVGGGFTAADYANIRHHTDGKWVEWNPKKPPTTYIELAGGDSQYERPDMWIKPEDSVVICVKAASVSVSDQFRIGLTLRFPRFKRLRMDKDWKSALSVQEFLDLKSHAEQEHREKEFNVENFRKKRVKKTTKKPLAIAGYDENAEVQYAGPSGHIFDGLNFFILTDSNAPVKKSKAELENLVKANGGRIFQTNDAVPDTICIADRRTVKAASLQKKGDIDIIRPSWILDCIKQSEIDAGLPDLLLPLEPGHMFFMTKDKEEIVAGSLDQFNDSYARDITVEELRNLLDQMAKDGKTDSFCSPEAIQKVTEHIQEKVDSGWTMPCGWLFKGLVLCFPENENDSASEGPEPKQSQRIHLAQNTAKFAGASVTTSLKDTSITHVVVDPDFTSSELPKLRRTLSTRRKLPHIVKVNWIEDSWKENTLLDEEQHMPVYMRRYPNIQLMKV.

Disordered stretches follow at residues 1 to 34 and 51 to 72; these read METD…APTL and KKKP…LSAA. Positions 51–65 are enriched in basic residues; that stretch reads KKKPVGPAGNRRKAG. The ATP site is built by Glu315, Lys317, Leu318, Arg322, Glu384, Phe424, Glu484, Lys489, Lys506, and Lys508. Lys317 (N6-AMP-lysine intermediate) is an active-site residue. Glu384 contacts Mg(2+). Glu484 lines the Mg(2+) pocket. BRCT domains follow at residues 715–808 and 887–995; these read PSGH…PDLL and PCGW…QHMP.

Belongs to the ATP-dependent DNA ligase family. The cofactor is Mg(2+).

It localises to the nucleus. It catalyses the reaction ATP + (deoxyribonucleotide)n-3'-hydroxyl + 5'-phospho-(deoxyribonucleotide)m = (deoxyribonucleotide)n+m + AMP + diphosphate.. Its function is as follows. DNA ligase involved in DNA non-homologous end joining (NHEJ); required for double-strand break (DSB) repair. This chain is DNA ligase 4 (lig4), found in Emericella nidulans (strain FGSC A4 / ATCC 38163 / CBS 112.46 / NRRL 194 / M139) (Aspergillus nidulans).